The chain runs to 249 residues: 2,5-diamino-6-ribosylamino-4(3H)-pyrimidinone 5'-phosphate reductase (249 aa).

NADP(+)-binding positions include T79, D83, M164, and 187 to 191 (GGIVI).

The protein belongs to the HTP reductase family. In terms of assembly, homodimer.

It catalyses the reaction 2,5-diamino-6-(1-D-ribitylamino)pyrimidin-4(3H)-one 5'-phosphate + NADP(+) = 2,5-diamino-6-(1-D-ribosylamino)pyrimidin-4(3H)-one 5'-phosphate + NADPH + H(+). The enzyme catalyses 2,5-diamino-6-(1-D-ribitylamino)pyrimidin-4(3H)-one 5'-phosphate + NAD(+) = 2,5-diamino-6-(1-D-ribosylamino)pyrimidin-4(3H)-one 5'-phosphate + NADH + H(+). It functions in the pathway cofactor biosynthesis; riboflavin biosynthesis. Functionally, catalyzes an early step in riboflavin biosynthesis, the NADPH-dependent reduction of the ribose side chain of 2,5-diamino-6-ribosylamino-4(3H)-pyrimidinone 5'-phosphate, yielding 2,5-diamino-6-ribitylamino-4(3H)-pyrimidinone 5'-phosphate. This Kluyveromyces marxianus (Yeast) protein is 2,5-diamino-6-ribosylamino-4(3H)-pyrimidinone 5'-phosphate reductase (RIB7).